Here is a 162-residue protein sequence, read N- to C-terminus: 2-C-methyl-D-erythritol 2,4-cyclodiphosphate synthase (162 aa).

Residues aspartate 12 and histidine 14 each coordinate a divalent metal cation. Residues 12–14 and 38–39 each bind 4-CDP-2-C-methyl-D-erythritol 2-phosphate; these read DVH and HS. Histidine 46 is an a divalent metal cation binding site. 4-CDP-2-C-methyl-D-erythritol 2-phosphate contacts are provided by residues 60 to 62, 65 to 69, and arginine 146; these read DIG and FPDTD.

It belongs to the IspF family. In terms of assembly, homotrimer. It depends on a divalent metal cation as a cofactor.

It carries out the reaction 4-CDP-2-C-methyl-D-erythritol 2-phosphate = 2-C-methyl-D-erythritol 2,4-cyclic diphosphate + CMP. It participates in isoprenoid biosynthesis; isopentenyl diphosphate biosynthesis via DXP pathway; isopentenyl diphosphate from 1-deoxy-D-xylulose 5-phosphate: step 4/6. Involved in the biosynthesis of isopentenyl diphosphate (IPP) and dimethylallyl diphosphate (DMAPP), two major building blocks of isoprenoid compounds. Catalyzes the conversion of 4-diphosphocytidyl-2-C-methyl-D-erythritol 2-phosphate (CDP-ME2P) to 2-C-methyl-D-erythritol 2,4-cyclodiphosphate (ME-CPP) with a corresponding release of cytidine 5-monophosphate (CMP). This Bordetella petrii (strain ATCC BAA-461 / DSM 12804 / CCUG 43448) protein is 2-C-methyl-D-erythritol 2,4-cyclodiphosphate synthase.